A 231-amino-acid polypeptide reads, in one-letter code: Sensory transduction protein BceR (231 aa).

One can recognise a Response regulatory domain in the interval 3–116 (KLLLIEDDES…VLIAKIQAMF (114 aa)). 4-aspartylphosphate is present on Asp-52. Positions 127 to 225 (STIKTWCGAA…KVGQGYIAKE (99 aa)) form a DNA-binding region, ompR/PhoB-type.

In terms of processing, phosphorylated by BceS.

Its subcellular location is the cytoplasm. Its function is as follows. Member of the two-component regulatory system BceS/BceR involved in the regulation of bacitracin resistance. When activated by BceS, binds to the upstream region of the bceAB promoter and up-regulates the expression of these two genes. The polypeptide is Sensory transduction protein BceR (bceR) (Bacillus subtilis (strain 168)).